A 123-amino-acid chain; its full sequence is Small ribosomal subunit protein uS12cz/uS12cy (123 aa).

This sequence belongs to the universal ribosomal protein uS12 family. Part of the 30S ribosomal subunit.

Its subcellular location is the plastid. It localises to the chloroplast. Functionally, with S4 and S5 plays an important role in translational accuracy. Located at the interface of the 30S and 50S subunits. The polypeptide is Small ribosomal subunit protein uS12cz/uS12cy (rps12-A) (Populus alba (White poplar)).